Reading from the N-terminus, the 462-residue chain is L-seryl-tRNA(Sec) selenium transferase (462 aa).

Residue Lys294 is modified to N6-(pyridoxal phosphate)lysine.

Belongs to the SelA family. Homodecamer; pentamer of dimers. Binds only one seryl-tRNA(Sec) per dimer. The cofactor is pyridoxal 5'-phosphate.

The protein localises to the cytoplasm. The enzyme catalyses L-seryl-tRNA(Sec) + selenophosphate + H(+) = L-selenocysteinyl-tRNA(Sec) + phosphate. Its pathway is aminoacyl-tRNA biosynthesis; selenocysteinyl-tRNA(Sec) biosynthesis; selenocysteinyl-tRNA(Sec) from L-seryl-tRNA(Sec) (bacterial route): step 1/1. In terms of biological role, converts seryl-tRNA(Sec) to selenocysteinyl-tRNA(Sec) required for selenoprotein biosynthesis. The chain is L-seryl-tRNA(Sec) selenium transferase from Yersinia pestis bv. Antiqua (strain Antiqua).